The primary structure comprises 228 residues: FCS-Like Zinc finger 12 (228 aa).

The FLZ-type zinc-finger motif lies at 162-205 (DFLTSCCLCKKKLQGKDIYMYKGDEGFCSKECRSLKIMEDSLKE).

The protein belongs to the FLZ family. Interacts with KIN10 and KIN11 via its FLZ-type zinc finger domain. Interacts with KINB1 and KINB2 via its N-terminal part. Forms homodimer and heterodimer with FLZ2 and FLZ10 in vitro.

Its function is as follows. May act as an adapter to facilitate the interaction of SnRK1 complex with effector proteins, conferring tissue- and stimulus-type specific differences in the SnRK1 regulation pathway. The protein is FCS-Like Zinc finger 12 of Arabidopsis thaliana (Mouse-ear cress).